A 315-amino-acid polypeptide reads, in one-letter code: Jacalin-related lectin 10 (315 aa).

A signal peptide spans 1 to 23 (MVIIYIFLFLSSAIIDSTGLAKA). 2 Jacalin-type lectin domains span residues 24 to 165 (QKLD…YLTT) and 168 to 312 (PTKS…YFSP).

It belongs to the jacalin lectin family.

This Arabidopsis thaliana (Mouse-ear cress) protein is Jacalin-related lectin 10 (JAL10).